The following is a 118-amino-acid chain: Large ribosomal subunit protein bL19 (118 aa).

It belongs to the bacterial ribosomal protein bL19 family.

Its function is as follows. This protein is located at the 30S-50S ribosomal subunit interface and may play a role in the structure and function of the aminoacyl-tRNA binding site. The chain is Large ribosomal subunit protein bL19 from Geotalea uraniireducens (strain Rf4) (Geobacter uraniireducens).